The sequence spans 122 residues: Large ribosomal subunit protein uL14 (122 aa).

The protein belongs to the universal ribosomal protein uL14 family. Part of the 50S ribosomal subunit. Forms a cluster with proteins L3 and L19. In the 70S ribosome, L14 and L19 interact and together make contacts with the 16S rRNA in bridges B5 and B8.

Functionally, binds to 23S rRNA. Forms part of two intersubunit bridges in the 70S ribosome. The polypeptide is Large ribosomal subunit protein uL14 (Mycoplasma pneumoniae (strain ATCC 29342 / M129 / Subtype 1) (Mycoplasmoides pneumoniae)).